Here is a 416-residue protein sequence, read N- to C-terminus: Protein P47 (416 aa).

The protein belongs to the TULIP P47 family. Part of a crude toxin extract that includes BoNTA2/NTNH, P47, OrfX2 and OrfX3; OrfX1 was not detected.

Its function is as follows. Part of a botulinum neurotoxin type A2 (BoNT) locus; may be part of a progenitor toxin complex required to protect BoNT during its passage through the host gastrointestinal tract. In Clostridium botulinum (strain Kyoto / Type A2), this protein is Protein P47.